The sequence spans 100 residues: Small ribosomal subunit protein uS14m (100 aa).

It belongs to the universal ribosomal protein uS14 family.

The protein resides in the mitochondrion. This is Small ribosomal subunit protein uS14m (RPS14) from Vicia faba (Broad bean).